Reading from the N-terminus, the 420-residue chain is Nucleobindin-2 (420 aa).

The signal sequence occupies residues 1-24 (MRWRIIQVQYCFLLVPCMLTALEA). A DNA-binding region spans residues 171–223 (RTRHEEFKKYEMMKEHERREYLKTLSEEKRKEEESKFEEMKRKHEDHPKVNHP). The tract at residues 193–225 (KTLSEEKRKEEESKFEEMKRKHEDHPKVNHPGS) is disordered. Positions 213-420 (KHEDHPKVNH…AGELKFEPHT (208 aa)) are binds to necdin. EF-hand domains are found at residues 241–276 (PNDF…ELEK) and 293–328 (ERLR…KEFL). Residues Asp-254, Asn-256, Asp-258, Glu-265, Asp-306, Asn-308, Asp-310, and Glu-317 each coordinate Ca(2+). A GBA motif is present at residues 304 to 334 (EIDNNKDRLVTLEEFLRATEKKEFLEPDSWE). The residue at position 332 (Ser-332) is a Phosphoserine. Residues 365 to 389 (AEELQKQKEDLQRQHDHLEAQKQEY) show a composition bias toward basic and acidic residues. The tract at residues 365–420 (AEELQKQKEDLQRQHDHLEAQKQEYHQAVQHLEQKKLQQGIAPSGPAGELKFEPHT) is disordered.

This sequence belongs to the nucleobindin family. Interacts (via GBA motif) with guanine nucleotide-binding protein G(i) alpha subunit GNAI3. Preferentially interacts with inactive rather than active GNAI3. Interaction with GNAI3 is inhibited when NUCB2 binds calcium, probably due to a conformational change which renders the GBA motif inaccessible. Binds to the postmitotic growth suppressor NDN; coexpression abolishes NUCB2 secretion. Interacts with MC4R. As to expression, found in liver, heart, thymus, muscle, intestine, kidney, lung, spleen and throughout the brain, in cerebral cortex, hippocampus, hypothalamus and medulla oblongata. Nucb2 and necdin levels were higher in postmitotic neurons.

It is found in the cytoplasm. It localises to the perikaryon. The protein localises to the endoplasmic reticulum. Its subcellular location is the golgi apparatus. The protein resides in the nucleus envelope. It is found in the membrane. It localises to the secreted. Calcium-binding protein which may have a role in calcium homeostasis. Acts as a non-receptor guanine nucleotide exchange factor which binds to and activates guanine nucleotide-binding protein (G-protein) alpha subunit GNAI3. Its function is as follows. Anorexigenic peptide, seems to play an important role in hypothalamic pathways regulating food intake and energy homeostasis, acting in a leptin-independent manner. May also exert hypertensive roles and modulate blood pressure through directly acting on peripheral arterial resistance. In intestinal epithelial cells, plays a role in the inhibition of hepatic glucose production via MC4R receptor leading to increased cyclic adenosine monophosphate (cAMP) levels and glucagon-like peptide 1 (GLP-1) secretion. The polypeptide is Nucleobindin-2 (Nucb2) (Mus musculus (Mouse)).